We begin with the raw amino-acid sequence, 1174 residues long: Protein kinase C-like (1174 aa).

An REM-1 1 domain is found at 1-68 (MANVEETVAN…LRDLDLQRTT (68 aa)). Polar residues predominate over residues 69-84 (SGVDNMSLQPGRSPTN). A disordered region spans residues 69–140 (SGVDNMSLQP…PPPATANKRP (72 aa)). Over residues 96–123 (GYAQQDQGGYGGPQSQYSQLSGGEALQP) the composition is skewed to low complexity. A compositionally biased stretch (pro residues) spans 124–134 (PRAPFAAPPPA). The region spanning 149 to 226 (KYDTPHLGPR…LKRYEDLHVD (78 aa)) is the REM-1 2 domain. Residues 229-349 (GDGDDNDSLD…MRRKKLETEL (121 aa)) form the C2 domain. The disordered stretch occupies residues 358–406 (DKMGGHTGIQPDMQFQPPPGQSPAGGPGGGPTPAGVRPPGAPQPQTGPI). Residues 380-389 (PAGGPGGGPT) show a composition bias toward gly residues. Phorbol-ester/DAG-type zinc fingers lie at residues 458 to 506 (GHKF…VTKC) and 526 to 576 (PHRF…PDFC). The segment at 593–842 (TRRGQSSSGP…PAANTQGTGK (250 aa)) is disordered. Residues 596–611 (GQSSSGPGMSQRTLRP) show a composition bias toward polar residues. Positions 624-636 (QSPGQPGQESPTQ) are enriched in low complexity. Residues 648 to 657 (SPPPGPPRQP) show a composition bias toward pro residues. Residues 658-709 (SYPSSATSVDAARASYSTTGTASTGAPTSPTSGSRPPSGPRTQSSVAAAAAA) are compositionally biased toward low complexity. A compositionally biased stretch (polar residues) spans 720–744 (RSNTDYSPQSGRSSGSGYPTEQRMS). Pro residues predominate over residues 786–802 (LPQPPPPQSPPQHPQQP). The span at 808–820 (KMPEQQALTQQPP) shows a compositional bias: polar residues. Positions 849 to 1108 (FNFLAVLGKG…AQEIMSHAFF (260 aa)) constitute a Protein kinase domain. ATP is bound by residues 855–863 (LGKGNFGKV) and lysine 878. Aspartate 974 (proton acceptor) is an active-site residue. The 66-residue stretch at 1109 to 1174 (RNINWDDIYH…RGFSYSADFA (66 aa)) folds into the AGC-kinase C-terminal domain.

Belongs to the protein kinase superfamily. AGC Ser/Thr protein kinase family. PKC subfamily.

It catalyses the reaction L-seryl-[protein] + ATP = O-phospho-L-seryl-[protein] + ADP + H(+). It carries out the reaction L-threonyl-[protein] + ATP = O-phospho-L-threonyl-[protein] + ADP + H(+). The polypeptide is Protein kinase C-like (PKC1) (Cochliobolus heterostrophus (Southern corn leaf blight fungus)).